The chain runs to 362 residues: Holliday junction branch migration complex subunit RuvB (362 aa).

Residues 1–183 (MADSSLVGGG…FGFTGHLEFY (183 aa)) are large ATPase domain (RuvB-L). ATP contacts are provided by residues L22, R23, G64, K67, T68, T69, 130-132 (EDF), R173, Y183, and R220. Mg(2+) is bound at residue T68. Residues 184–254 (SVEELELVLR…TASAALDMYE (71 aa)) are small ATPAse domain (RuvB-S). Residues 257-362 (KRGLDRLDRS…PVAEWLPNGQ (106 aa)) form a head domain (RuvB-H) region. DNA contacts are provided by R312 and R317.

This sequence belongs to the RuvB family. In terms of assembly, homohexamer. Forms an RuvA(8)-RuvB(12)-Holliday junction (HJ) complex. HJ DNA is sandwiched between 2 RuvA tetramers; dsDNA enters through RuvA and exits via RuvB. An RuvB hexamer assembles on each DNA strand where it exits the tetramer. Each RuvB hexamer is contacted by two RuvA subunits (via domain III) on 2 adjacent RuvB subunits; this complex drives branch migration. In the full resolvosome a probable DNA-RuvA(4)-RuvB(12)-RuvC(2) complex forms which resolves the HJ.

The protein resides in the cytoplasm. The enzyme catalyses ATP + H2O = ADP + phosphate + H(+). The RuvA-RuvB-RuvC complex processes Holliday junction (HJ) DNA during genetic recombination and DNA repair, while the RuvA-RuvB complex plays an important role in the rescue of blocked DNA replication forks via replication fork reversal (RFR). RuvA specifically binds to HJ cruciform DNA, conferring on it an open structure. The RuvB hexamer acts as an ATP-dependent pump, pulling dsDNA into and through the RuvAB complex. RuvB forms 2 homohexamers on either side of HJ DNA bound by 1 or 2 RuvA tetramers; 4 subunits per hexamer contact DNA at a time. Coordinated motions by a converter formed by DNA-disengaged RuvB subunits stimulates ATP hydrolysis and nucleotide exchange. Immobilization of the converter enables RuvB to convert the ATP-contained energy into a lever motion, pulling 2 nucleotides of DNA out of the RuvA tetramer per ATP hydrolyzed, thus driving DNA branch migration. The RuvB motors rotate together with the DNA substrate, which together with the progressing nucleotide cycle form the mechanistic basis for DNA recombination by continuous HJ branch migration. Branch migration allows RuvC to scan DNA until it finds its consensus sequence, where it cleaves and resolves cruciform DNA. The chain is Holliday junction branch migration complex subunit RuvB from Arthrobacter sp. (strain FB24).